Reading from the N-terminus, the 453-residue chain is Bifunctional protein GlmU (453 aa).

Positions 1–231 are pyrophosphorylase; it reads MERSSLAVIL…EKELTGCNNR (231 aa). UDP-N-acetyl-alpha-D-glucosamine is bound by residues 10 to 13, K24, Q77, 82 to 83, 105 to 107, G143, E157, N172, and N229; these read LAAG, GT, and YGD. D107 contributes to the Mg(2+) binding site. N229 is a binding site for Mg(2+). Positions 232 to 252 are linker; the sequence is AELAFIERLWQERRRHELMVD. Residues 253 to 453 are N-acetyltransferase; that stretch reads GVSMIAPETV…AQKEAKKKSS (201 aa). Positions 318 and 336 each coordinate UDP-N-acetyl-alpha-D-glucosamine. H348 serves as the catalytic Proton acceptor. 2 residues coordinate UDP-N-acetyl-alpha-D-glucosamine: Y351 and N362. Acetyl-CoA is bound by residues A365, 371-372, S390, S408, and R425; that span reads NY.

It in the N-terminal section; belongs to the N-acetylglucosamine-1-phosphate uridyltransferase family. The protein in the C-terminal section; belongs to the transferase hexapeptide repeat family. As to quaternary structure, homotrimer. Mg(2+) is required as a cofactor.

Its subcellular location is the cytoplasm. The enzyme catalyses alpha-D-glucosamine 1-phosphate + acetyl-CoA = N-acetyl-alpha-D-glucosamine 1-phosphate + CoA + H(+). It catalyses the reaction N-acetyl-alpha-D-glucosamine 1-phosphate + UTP + H(+) = UDP-N-acetyl-alpha-D-glucosamine + diphosphate. It participates in nucleotide-sugar biosynthesis; UDP-N-acetyl-alpha-D-glucosamine biosynthesis; N-acetyl-alpha-D-glucosamine 1-phosphate from alpha-D-glucosamine 6-phosphate (route II): step 2/2. Its pathway is nucleotide-sugar biosynthesis; UDP-N-acetyl-alpha-D-glucosamine biosynthesis; UDP-N-acetyl-alpha-D-glucosamine from N-acetyl-alpha-D-glucosamine 1-phosphate: step 1/1. It functions in the pathway bacterial outer membrane biogenesis; LPS lipid A biosynthesis. Its function is as follows. Catalyzes the last two sequential reactions in the de novo biosynthetic pathway for UDP-N-acetylglucosamine (UDP-GlcNAc). The C-terminal domain catalyzes the transfer of acetyl group from acetyl coenzyme A to glucosamine-1-phosphate (GlcN-1-P) to produce N-acetylglucosamine-1-phosphate (GlcNAc-1-P), which is converted into UDP-GlcNAc by the transfer of uridine 5-monophosphate (from uridine 5-triphosphate), a reaction catalyzed by the N-terminal domain. In Agrobacterium fabrum (strain C58 / ATCC 33970) (Agrobacterium tumefaciens (strain C58)), this protein is Bifunctional protein GlmU.